The primary structure comprises 237 residues: Ubiquinone/menaquinone biosynthesis C-methyltransferase UbiE (237 aa).

Residues Thr-60 and Asp-80 each coordinate S-adenosyl-L-methionine.

This sequence belongs to the class I-like SAM-binding methyltransferase superfamily. MenG/UbiE family.

The enzyme catalyses a 2-demethylmenaquinol + S-adenosyl-L-methionine = a menaquinol + S-adenosyl-L-homocysteine + H(+). It catalyses the reaction a 2-methoxy-6-(all-trans-polyprenyl)benzene-1,4-diol + S-adenosyl-L-methionine = a 5-methoxy-2-methyl-3-(all-trans-polyprenyl)benzene-1,4-diol + S-adenosyl-L-homocysteine + H(+). It participates in quinol/quinone metabolism; menaquinone biosynthesis; menaquinol from 1,4-dihydroxy-2-naphthoate: step 2/2. It functions in the pathway cofactor biosynthesis; ubiquinone biosynthesis. Functionally, methyltransferase required for the conversion of demethylmenaquinol (DMKH2) to menaquinol (MKH2) and the conversion of 2-polyprenyl-6-methoxy-1,4-benzoquinol (DDMQH2) to 2-polyprenyl-3-methyl-6-methoxy-1,4-benzoquinol (DMQH2). The protein is Ubiquinone/menaquinone biosynthesis C-methyltransferase UbiE of Syntrophotalea carbinolica (strain DSM 2380 / NBRC 103641 / GraBd1) (Pelobacter carbinolicus).